A 449-amino-acid chain; its full sequence is Putative glycosyltransferase 7 (449 aa).

The Cytoplasmic portion of the chain corresponds to 1–32; the sequence is MVSPETSSSHYQSSPMAKYAGTRTRPVVCISD. Residues 33–53 form a helical; Signal-anchor for type II membrane protein membrane-spanning segment; sequence VVLFLGGAFMSLILVWSFFSF. Residues 54-449 are Lumenal-facing; it reads SSISPNLTVK…VPFDYPDEPW (396 aa). N-linked (GlcNAc...) asparagine glycosylation is found at Asn-59, Asn-123, and Asn-332.

This sequence belongs to the glycosyltransferase 34 family.

Its subcellular location is the golgi apparatus membrane. In terms of biological role, probable glycosyltransferase that may be involved in the biosynthesis of xyloglucan. The protein is Putative glycosyltransferase 7 (GT7) of Arabidopsis thaliana (Mouse-ear cress).